The following is a 53-amino-acid chain: Photosystem II reaction center protein K (53 aa).

The propeptide occupies 1–16 (MFYTNVETLLNTNCFA). Residues 28-48 (LVDVLPIIPLLFLLLAFVWQA) traverse the membrane as a helical segment.

Belongs to the PsbK family. In terms of assembly, PSII is composed of 1 copy each of membrane proteins PsbA, PsbB, PsbC, PsbD, PsbE, PsbF, PsbH, PsbI, PsbJ, PsbK, PsbL, PsbM, PsbT, PsbY, PsbZ, Psb30/Ycf12, at least 3 peripheral proteins of the oxygen-evolving complex and a large number of cofactors. It forms dimeric complexes.

The protein resides in the plastid. The protein localises to the chloroplast thylakoid membrane. In terms of biological role, one of the components of the core complex of photosystem II (PSII). PSII is a light-driven water:plastoquinone oxidoreductase that uses light energy to abstract electrons from H(2)O, generating O(2) and a proton gradient subsequently used for ATP formation. It consists of a core antenna complex that captures photons, and an electron transfer chain that converts photonic excitation into a charge separation. The polypeptide is Photosystem II reaction center protein K (Euglena anabaena (Euglenaria anabaena)).